The following is a 146-amino-acid chain: 3-hydroxyacyl-[acyl-carrier-protein] dehydratase FabZ (146 aa).

H49 is an active-site residue.

The protein belongs to the thioester dehydratase family. FabZ subfamily.

It is found in the cytoplasm. The catalysed reaction is a (3R)-hydroxyacyl-[ACP] = a (2E)-enoyl-[ACP] + H2O. Its function is as follows. Involved in unsaturated fatty acids biosynthesis. Catalyzes the dehydration of short chain beta-hydroxyacyl-ACPs and long chain saturated and unsaturated beta-hydroxyacyl-ACPs. The sequence is that of 3-hydroxyacyl-[acyl-carrier-protein] dehydratase FabZ from Azotobacter vinelandii (strain DJ / ATCC BAA-1303).